Consider the following 128-residue polypeptide: Ribonuclease P protein component (128 aa).

This sequence belongs to the RnpA family. Consists of a catalytic RNA component (M1 or rnpB) and a protein subunit.

It carries out the reaction Endonucleolytic cleavage of RNA, removing 5'-extranucleotides from tRNA precursor.. Functionally, RNaseP catalyzes the removal of the 5'-leader sequence from pre-tRNA to produce the mature 5'-terminus. It can also cleave other RNA substrates such as 4.5S RNA. The protein component plays an auxiliary but essential role in vivo by binding to the 5'-leader sequence and broadening the substrate specificity of the ribozyme. The protein is Ribonuclease P protein component of Prochlorococcus marinus (strain MIT 9215).